The sequence spans 313 residues: Porphobilinogen deaminase (313 aa).

Residue Cys-242 is modified to S-(dipyrrolylmethanemethyl)cysteine.

This sequence belongs to the HMBS family. As to quaternary structure, monomer. It depends on dipyrromethane as a cofactor.

It catalyses the reaction 4 porphobilinogen + H2O = hydroxymethylbilane + 4 NH4(+). Its pathway is porphyrin-containing compound metabolism; protoporphyrin-IX biosynthesis; coproporphyrinogen-III from 5-aminolevulinate: step 2/4. Functionally, tetrapolymerization of the monopyrrole PBG into the hydroxymethylbilane pre-uroporphyrinogen in several discrete steps. This Escherichia coli O45:K1 (strain S88 / ExPEC) protein is Porphobilinogen deaminase.